Reading from the N-terminus, the 380-residue chain is Cytochrome b (380 aa).

Transmembrane regions (helical) follow at residues 34–54 (FGSLLGTCLATQIITGLLLAM), 78–99 (WLIRNLHANGASFFFICIYLHI), 114–134 (WNTGVVLLLTLMATAFVGYVL), and 179–199 (FFALHFLLPFLIAGLTLIHLT). Histidine 84 and histidine 98 together coordinate heme b. Heme b contacts are provided by histidine 183 and histidine 197. Position 202 (histidine 202) interacts with a ubiquinone. Transmembrane regions (helical) follow at residues 227–247 (TKDLLGFIIMLTPLMTLALFS), 289–309 (LGGVLALTASVLVLFLSPFLH), 321–341 (LSQILFWTLVANLLILTWVGS), and 348–368 (FIIIGQLASLTYFTILLILFP).

It belongs to the cytochrome b family. As to quaternary structure, the cytochrome bc1 complex contains 11 subunits: 3 respiratory subunits (MT-CYB, CYC1 and UQCRFS1), 2 core proteins (UQCRC1 and UQCRC2) and 6 low-molecular weight proteins (UQCRH/QCR6, UQCRB/QCR7, UQCRQ/QCR8, UQCR10/QCR9, UQCR11/QCR10 and a cleavage product of UQCRFS1). This cytochrome bc1 complex then forms a dimer. The cofactor is heme b.

It localises to the mitochondrion inner membrane. Functionally, component of the ubiquinol-cytochrome c reductase complex (complex III or cytochrome b-c1 complex) that is part of the mitochondrial respiratory chain. The b-c1 complex mediates electron transfer from ubiquinol to cytochrome c. Contributes to the generation of a proton gradient across the mitochondrial membrane that is then used for ATP synthesis. This Aerodramus vulcanorum (Volcano swiftlet) protein is Cytochrome b (MT-CYB).